The chain runs to 51 residues: UPF0337 protein NE0131 (51 aa).

This sequence belongs to the UPF0337 (CsbD) family.

The chain is UPF0337 protein NE0131 from Nitrosomonas europaea (strain ATCC 19718 / CIP 103999 / KCTC 2705 / NBRC 14298).